Consider the following 302-residue polypeptide: Melibiose operon regulatory protein (302 aa).

In terms of domain architecture, HTH araC/xylS-type spans 194 to 292; it reads SQMLGFIAEN…GMSPQQYRKL (99 aa). DNA-binding regions (H-T-H motif) lie at residues 211-232 and 259-282; these read NDVA…QRVM and ILDI…GKYV.

Transcription activator for the expression of the melAB operon. MelR binds at two sites located upstream of the melAB transcription site. The sequence is that of Melibiose operon regulatory protein (melR) from Escherichia coli O6:H1 (strain CFT073 / ATCC 700928 / UPEC).